The following is a 228-amino-acid chain: Glucose-induced degradation protein 8 homolog (228 aa).

Residues 29–61 (SKSDLNKLVMNYLVIEGYQEAAAKFQEESSTQT) form the LisH domain. A CTLH domain is found at 67-124 (SIADRMAIRSAIQCGDVEKGIEIVNDLNPEILDTNPQLYFHLQQQKLIELIRKGMTAE).

It belongs to the GID8 family.

It is found in the cytoplasm. Its subcellular location is the nucleus. Core component of the CTLH E3 ubiquitin-protein ligase complex that mediates ubiquitination and subsequent proteasomal degradation of target proteins. Acts as a positive regulator of Wnt signaling pathway by promoting beta-catenin (CTNNB1) nuclear accumulation. This Dictyostelium discoideum (Social amoeba) protein is Glucose-induced degradation protein 8 homolog.